Here is a 1121-residue protein sequence, read N- to C-terminus: tRNA (34-2'-O)-methyltransferase regulator WDR6 (1121 aa).

Met-1 is subject to N-acetylmethionine. WD repeat units follow at residues 53–97 (IKRV…VVKI), 105–143 (WELW…LYDP), 147–189 (CILQ…VWYP), 200–238 (APDR…IWKV), 247–285 (RVQN…VWSH), 289–327 (ILQA…LWHL), 335–376 (LGVS…LYDV), 381–422 (WEQL…VVPI), 425–470 (PTAA…ISAA), 476–520 (IFVK…LFPS), 559–598 (PVST…FVRD), 604–642 (VLRQ…VWNP), 645–684 (HEKL…LYRA), 739–785 (LTDI…VWGI), 848–893 (RNRH…LFLL), 901–946 (QLLA…FWDL), 970–1012 (GTPS…VFVL), 1036–1073 (EEYS…FWRL), and 1079–1121 (TFMN…NWYD).

It belongs to the WD repeat WDR6 family. As to quaternary structure, interacts with FTSJ1; the interaction is direct, and required for 2'-O-methylation of position 34 in substrate tRNAs. Interacts with IRS4. Interacts with STK11/LKB1. As to expression, ubiquitous.

It is found in the cytoplasm. Its function is as follows. Together with methyltransferase FTSJ1, methylates the 2'-O-ribose of nucleotides at position 34 of the tRNA anticodon loop of substrate tRNAs. Required for the correct positioning of the substrate tRNA for methylation. Required to suppress amino acid starvation-induced autophagy. Enhances the STK11/LKB1-induced cell growth suppression activity. This Homo sapiens (Human) protein is tRNA (34-2'-O)-methyltransferase regulator WDR6 (WDR6).